Consider the following 186-residue polypeptide: RNA polymerase sigma factor NccH (186 aa).

The short motif at 49-62 (DIVQDTFIAAWHAL) is the Polymerase core binding element. Residues 152 to 171 (HPEAAMALGTSAKAVESRVA) constitute a DNA-binding region (H-T-H motif).

Belongs to the sigma-70 factor family. ECF subfamily.

Its function is as follows. Sigma factors are initiation factors that promote the attachment of RNA polymerase to specific initiation sites and are then released. This sigma factor regulates the genes for a membrane-located efflux system that confers resistance to nickel, cobalt and cadmium. This chain is RNA polymerase sigma factor NccH (nccH), found in Alcaligenes xylosoxydans xylosoxydans (Achromobacter xylosoxidans).